The primary structure comprises 98 residues: Derivative of benzaldehyde biosynthesis cluster protein C (98 aa).

The protein belongs to the YciI family.

The protein operates within secondary metabolite biosynthesis. Its function is as follows. Part of the gene cluster that mediates the biosynthesis of the antibiotic 2,4-dihydroxy-3-methyl-6-(2-oxopropyl)benzaldehyde (DHMBA) and its derivatives. The direct non-reducing polyketide synthase dbaI product is 2,4-dihydroxy-3-methyl-6-(2-oxopropyl)benzaldehyde (DHMBA), produced by condensation of one acetyl-CoA starter unit with 4 malonyl-CoA units and one methylation step. The FAD-dependent monooxygenase dbaH is responsible for the synthesis of yellow pigments derived from the oxidation of DHMBA. The roles of dbaB, C, E and F have still to be determined. The polypeptide is Derivative of benzaldehyde biosynthesis cluster protein C (Emericella nidulans (strain FGSC A4 / ATCC 38163 / CBS 112.46 / NRRL 194 / M139) (Aspergillus nidulans)).